The sequence spans 204 residues: 34 kDa membrane antigen (204 aa).

Residues 1-19 (MKRVSLLGSAAIFALVFSA) form the signal peptide. Cys-20 carries the N-palmitoyl cysteine lipid modification. Cys-20 carries S-diacylglycerol cysteine lipidation.

This sequence belongs to the UPF0423 family.

It is found in the cell membrane. This antigen is a pathogen-specific membrane immunogen. The polypeptide is 34 kDa membrane antigen (tpd) (Treponema pallidum (strain Nichols)).